A 485-amino-acid polypeptide reads, in one-letter code: Glutamyl-tRNA(Gln) amidotransferase subunit A (485 aa).

Active-site charge relay system residues include K79 and S154. The active-site Acyl-ester intermediate is the S178.

Belongs to the amidase family. GatA subfamily. As to quaternary structure, heterotrimer of A, B and C subunits.

It catalyses the reaction L-glutamyl-tRNA(Gln) + L-glutamine + ATP + H2O = L-glutaminyl-tRNA(Gln) + L-glutamate + ADP + phosphate + H(+). Allows the formation of correctly charged Gln-tRNA(Gln) through the transamidation of misacylated Glu-tRNA(Gln) in organisms which lack glutaminyl-tRNA synthetase. The reaction takes place in the presence of glutamine and ATP through an activated gamma-phospho-Glu-tRNA(Gln). The sequence is that of Glutamyl-tRNA(Gln) amidotransferase subunit A from Clostridium botulinum (strain Langeland / NCTC 10281 / Type F).